The primary structure comprises 225 residues: Futalosine hydrolase (225 aa).

This sequence belongs to the PNP/UDP phosphorylase family. Futalosine hydrolase subfamily. Homotetramer.

The catalysed reaction is futalosine + H2O = dehypoxanthine futalosine + hypoxanthine. The protein operates within quinol/quinone metabolism; menaquinone biosynthesis. No enhancing of inhibitory effects are observed with divalent metal ions. Slightly inhibited by hypoxanthine. Functionally, catalyzes the hydrolysis of futalosine (FL) to dehypoxanthine futalosine (DHFL) and hypoxanthine, a step in the biosynthesis of menaquinone (MK, vitamin K2). Is highly specific to futalosine since it does not accept aminodeoxyfutalosine (AFL), or any structurally related nucleotides and nucleosides as substrate. In Thermus thermophilus (strain ATCC 27634 / DSM 579 / HB8), this protein is Futalosine hydrolase.